A 309-amino-acid polypeptide reads, in one-letter code: Elongation factor Ts (309 aa).

The involved in Mg(2+) ion dislocation from EF-Tu stretch occupies residues 82–85 (TDFV).

Belongs to the EF-Ts family.

The protein resides in the cytoplasm. Associates with the EF-Tu.GDP complex and induces the exchange of GDP to GTP. It remains bound to the aminoacyl-tRNA.EF-Tu.GTP complex up to the GTP hydrolysis stage on the ribosome. The chain is Elongation factor Ts from Rickettsia africae (strain ESF-5).